The sequence spans 238 residues: Large ribosomal subunit protein uL5c (238 aa).

It belongs to the universal ribosomal protein uL5 family. As to quaternary structure, part of the 50S ribosomal subunit; contacts the 5S rRNA.

It localises to the plastid. Its subcellular location is the chloroplast. Functionally, binds 5S rRNA, forms part of the central protuberance of the 50S subunit. This is Large ribosomal subunit protein uL5c (rpl5) from Phaeodactylum tricornutum (strain CCAP 1055/1).